The primary structure comprises 334 residues: Adenosine deaminase (334 aa).

Zn(2+)-binding residues include His-16 and His-18. His-18, Asp-20, and Gly-173 together coordinate substrate. His-200 provides a ligand contact to Zn(2+). Catalysis depends on Glu-203, which acts as the Proton donor. Asp-281 is a Zn(2+) binding site.

This sequence belongs to the metallo-dependent hydrolases superfamily. Adenosine and AMP deaminases family. Adenosine deaminase subfamily. The cofactor is Zn(2+).

It carries out the reaction adenosine + H2O + H(+) = inosine + NH4(+). The catalysed reaction is 2'-deoxyadenosine + H2O + H(+) = 2'-deoxyinosine + NH4(+). Catalyzes the hydrolytic deamination of adenosine and 2-deoxyadenosine. The chain is Adenosine deaminase from Clostridium acetobutylicum (strain ATCC 824 / DSM 792 / JCM 1419 / IAM 19013 / LMG 5710 / NBRC 13948 / NRRL B-527 / VKM B-1787 / 2291 / W).